A 580-amino-acid polypeptide reads, in one-letter code: Mucolipin-1 (580 aa).

The interval 1–38 (MTAPAGPRGSETERLLTPNPGYGTQAGPSPAPPTPPEE) is disordered. At 1-65 (MTAPAGPRGS…FRAKGRKPCK (65 aa)) the chain is on the cytoplasmic side. Serine 10 carries the phosphoserine modification. Residues 11–16 (ETERLL) carry the Dileucine motif; mediates targeting to lysosomes motif. Residues 42–62 (RRRLKYFFMSPCDKFRAKGRK) are interaction with phosphoinositides. A helical transmembrane segment spans residues 66-86 (LMLQVVKILVVTVQLILFGLS). At 87-298 (NQLAVTFREE…VFQHGDNSFR (212 aa)) the chain is on the extracellular side. Positions 107 to 121 (LGYSDGADDTFAAYT) are extracellular/lumenal pore loop. Cysteine 166 and cysteine 192 are joined by a disulfide. The N-linked (GlcNAc...) asparagine glycan is linked to asparagine 230. Cysteine 253 and cysteine 284 are disulfide-bonded. A helical transmembrane segment spans residues 299-321 (LLFDVVVILTCSLSFLLCARSLL). The Cytoplasmic portion of the chain corresponds to 322 to 350 (RGFLLQNEFVGFMWRQRGRVISLWERLEF). Residues 351–371 (VNGWYILLVTSDVLTISGTIM) form a helical membrane-spanning segment. Over 372 to 382 (KIGIEAKNLAS) the chain is Extracellular. The helical transmembrane segment at 383–405 (YDVCSILLGTSTLLVWVGVIRYL) threads the bilayer. At 406–427 (TFFHNYNILIATLRVALPSVMR) the chain is on the cytoplasmic side. A helical membrane pass occupies residues 428–448 (FCCCVAVIYLGYCFCGWIVLG). Topologically, residues 449-456 (PYHVKFRS) are extracellular. The pore-forming intramembrane region spans 457–477 (LSMVSECLFSLINGDDMFVTF). The Selectivity filter signature appears at 469–474 (NGDDMF). The Extracellular portion of the chain corresponds to 478–491 (AAMQAQQGRSSLVW). Residues 492-513 (LFSQLYLYSFISLFIYMVLSLF) traverse the membrane as a helical segment. Residues 514–580 (IALITGAYDT…PSEEHSLLVN (67 aa)) lie on the Cytoplasmic side of the membrane. Residues serine 557 and serine 559 each carry the phosphoserine; by PAK modification. The required for palmitoylation and association with membranes stretch occupies residues 565 to 567 (CCC). A Dileucine internalization motif; mediates AP2 complex-dependent internalization motif is present at residues 573-578 (EEHSLL).

Belongs to the transient receptor (TC 1.A.4) family. Polycystin subfamily. MCOLN1 sub-subfamily. As to quaternary structure, homotetramer. Homooligomer. Can heterooligomerize with MCOLN2 or MCOLN3; heteromeric assemblies have different channel properties as compared to the respective homooligomers and may be tissue-specific. Interacts with PDCD6. Interacts with TMEM163. Interacts with LAPTM4B. Palmitoylated; involved in association with membranes. Post-translationally, phosphorylation by PKA inhibits channel activity. Dephosphorylation increases activity. In terms of processing, proteolytically cleaved probably involving multiple lysosomal proteases including cathepsin B; inhibits lysosomal channel activity. In terms of tissue distribution, widely expressed in adult and fetal tissues.

Its subcellular location is the late endosome membrane. It localises to the lysosome membrane. The protein localises to the cytoplasmic vesicle membrane. It is found in the cell projection. The protein resides in the phagocytic cup. Its subcellular location is the cytoplasmic vesicle. It localises to the phagosome membrane. The protein localises to the cell membrane. The enzyme catalyses Ca(2+)(in) = Ca(2+)(out). The catalysed reaction is Fe(2+)(in) = Fe(2+)(out). It catalyses the reaction Mg(2+)(in) = Mg(2+)(out). It carries out the reaction K(+)(in) = K(+)(out). The enzyme catalyses Na(+)(in) = Na(+)(out). Its activity is regulated as follows. Channel activity is controlled by multiple regulatory mechanisms in different subcellular compartments. Channel function is transiently modulated by changes in Ca(2+) in a pH-dependent manner; pH changes modify the aggregation state of unitary channels; a negative cooperativity between extracellular/lumenal Ca(2+) and H(+) is suggested. Regulated by phosphoinositides in a compartment-specific manner: in lysosomes activated by PtdIns(3,5)P2 (Phosphatidylinositol 3,5-bisphosphate) and at the plasma membrane inhibited by PtdIns(4,5)P2 (Phosphatidylinositol 4,5-bisphosphate). Nonselective cation channel probably playing a role in the regulation of membrane trafficking events and of metal homeostasis. Acts as a Ca(2+)-permeable cation channel with inwardly rectifying activity. Proposed to play a major role in Ca(2+) release from late endosome and lysosome vesicles to the cytoplasm, which is important for many lysosome-dependent cellular events, including the fusion and trafficking of these organelles, exocytosis and autophagy. Required for efficient uptake of large particles in macrophages in which Ca(2+) release from the lysosomes triggers lysosomal exocytosis. May also play a role in phagosome-lysosome fusion. Involved in lactosylceramide trafficking indicative for a role in the regulation of late endocytic membrane fusion/fission events. By mediating lysosomal Ca(2+) release is involved in regulation of mTORC1 signaling and in mTOR/TFEB-dependent lysosomal adaptation to environmental cues such as nutrient levels. Seems to act as lysosomal active oxygen species (ROS) sensor involved in ROS-induced TFEB activation and autophagy. Also functions as a Fe(2+) permeable channel in late endosomes and lysosomes. Also permeable to Mg(2+), Na(+). K(+) and Cs(+). Proposed to play a role in zinc homeostasis probably implicating its association with TMEM163 In adaptive immunity, TRPML2 and TRPML1 may play redundant roles in the function of the specialized lysosomes of B cells. Functionally, may contribute to cellular lipase activity within the late endosomal pathway or at the cell surface which may be involved in processes of membrane reshaping and vesiculation, especially the growth of tubular structures. However, it is not known, whether it conveys the enzymatic activity directly, or merely facilitates the activity of an associated phospholipase. In Homo sapiens (Human), this protein is Mucolipin-1.